The sequence spans 464 residues: Desmin (464 aa).

At S2 the chain carries Blocked amino end (Ser). Residues 2–100 (SQSYSSSQRV…QEFLQTRTNE (99 aa)) form a head region. Phosphoserine; by CDK1 occurs at positions 7 and 23. Residue T65 is modified to Phosphothreonine; by CDK1. The region spanning 100–408 (EKVELQELND…KLLEGEENRI (309 aa)) is the IF rod domain. The interval 101 to 133 (KVELQELNDRFANYIEKVRFLEQQNALMVAEVN) is coil 1A. Residues 134 to 143 (RLRGKEPTRV) are linker 1. The segment at 144 to 244 (AEMYEEELRE…HEEEIRELQA (101 aa)) is coil 1B. The linker 12 stretch occupies residues 245–260 (QLQEQHIQVEMDISKP). Positions 261–279 (DLTAALRDIRAQYESIAAK) are coil 2A. Residues 280-287 (NIAEAEEW) are linker 2. The coil 2B stretch occupies residues 288 to 404 (YKSKVSDLTQ…ATYRKLLEGE (117 aa)). The interval 405 to 464 (ENRISIPMHQTFASALNFRETSPDQRGSEVHTKKTVMIKTIETRDGEVVSEATQQQHEVL) is tail.

This sequence belongs to the intermediate filament family. As to quaternary structure, homomer.

The protein localises to the cytoplasm. Its subcellular location is the myofibril. It localises to the sarcomere. It is found in the z line. The protein resides in the cell membrane. The protein localises to the sarcolemma. In terms of biological role, muscle-specific type III intermediate filament essential for proper muscular structure and function. Plays a crucial role in maintaining the structure of sarcomeres, inter-connecting the Z-disks and forming the myofibrils, linking them not only to the sarcolemmal cytoskeleton, but also to the nucleus and mitochondria, thus providing strength for the muscle fiber during activity. In adult striated muscle they form a fibrous network connecting myofibrils to each other and to the plasma membrane from the periphery of the Z-line structures. The protein is Desmin (DES) of Gallus gallus (Chicken).